The sequence spans 717 residues: Ribosomal RNA large subunit methyltransferase K/L (717 aa).

The THUMP domain occupies 44-155 (DAYKVCIYSY…KQFVNVFLCL (112 aa)).

The protein belongs to the methyltransferase superfamily. RlmKL family.

It is found in the cytoplasm. The catalysed reaction is guanosine(2445) in 23S rRNA + S-adenosyl-L-methionine = N(2)-methylguanosine(2445) in 23S rRNA + S-adenosyl-L-homocysteine + H(+). It carries out the reaction guanosine(2069) in 23S rRNA + S-adenosyl-L-methionine = N(2)-methylguanosine(2069) in 23S rRNA + S-adenosyl-L-homocysteine + H(+). In terms of biological role, specifically methylates the guanine in position 2445 (m2G2445) and the guanine in position 2069 (m7G2069) of 23S rRNA. This chain is Ribosomal RNA large subunit methyltransferase K/L, found in Francisella tularensis subsp. holarctica (strain FTNF002-00 / FTA).